A 261-amino-acid polypeptide reads, in one-letter code: MNPSQHAEQFQSQLANYVPQFTPEFWPVWLIIAGVLLVGMWLVLGLHALLRARGVKKSATDHGEKIYLYSKAVRLWHWSNALLFVLLLASGLINHFAMVGATAVKSLVAVHEVCGFLLLACWLGFVLINAVGDNGHHYRIRRQGWLERAAKQTRFYLFGIMQGEEHPFPATTQSKFNPLQQVAYVGVMYGLLPLLLLTGLLCLYPQAVGDVFPGVRYWLLQTHFALAFISLFFIFGHLYLCTTGRTPHETFKSMVDGYHRH.

Residues 25–45 (FWPVWLIIAGVLLVGMWLVLG) traverse the membrane as a helical segment. His77 serves as a coordination point for heme b. 3 helical membrane passes run 81-101 (ALLFVLLLASGLINHFAMVGA), 108-128 (VAVHEVCGFLLLACWLGFVLI), and 182-202 (VAYVGVMYGLLPLLLLTGLLC). His111 provides a ligand contact to heme b. 2 residues coordinate heme b: His223 and His237. Residues 224 to 244 (FALAFISLFFIFGHLYLCTTG) form a helical membrane-spanning segment. His237 contacts a menaquinone.

The protein belongs to the PhsC family. Heme is required as a cofactor.

It is found in the cell inner membrane. The sequence is that of Putative cytochrome YdhU (ydhU) from Escherichia coli (strain K12).